The sequence spans 110 residues: HIT-like protein CPn_0488/CP_0266/CPj0488/CpB0508 (110 aa).

The HIT domain occupies Val-3–Ala-110. Positions His-95 to His-99 match the Histidine triad motif motif.

This is HIT-like protein CPn_0488/CP_0266/CPj0488/CpB0508 from Chlamydia pneumoniae (Chlamydophila pneumoniae).